Here is a 478-residue protein sequence, read N- to C-terminus: Argininosuccinate lyase (478 aa).

The protein belongs to the lyase 1 family. Argininosuccinate lyase subfamily.

It localises to the cytoplasm. The enzyme catalyses 2-(N(omega)-L-arginino)succinate = fumarate + L-arginine. The protein operates within amino-acid biosynthesis; L-arginine biosynthesis; L-arginine from L-ornithine and carbamoyl phosphate: step 3/3. This Leptospira biflexa serovar Patoc (strain Patoc 1 / Ames) protein is Argininosuccinate lyase.